A 342-amino-acid chain; its full sequence is WW domain binding protein 1-like (342 aa).

A helical transmembrane segment spans residues 42–62; sequence LWWFWLVWTIIIILSCCCVCH. 2 disordered regions span residues 133-247 and 292-320; these read LPPQ…RRFT and PGDE…RPPA. Positions 158-173 are enriched in low complexity; that stretch reads SSPLSEPSRSSTRPPS. Position 173 is a phosphoserine (S173). Positions 212–240 are enriched in basic and acidic residues; it reads LDKDAECREELLKDDSSEHGAPDSKEKTP.

It is found in the membrane. The protein is WW domain binding protein 1-like (WBP1L) of Homo sapiens (Human).